Here is a 429-residue protein sequence, read N- to C-terminus: UDP-N-acetylglucosamine 1-carboxyvinyltransferase (429 aa).

Phosphoenolpyruvate is bound at residue 22-23 (KN). Arg-102 contacts UDP-N-acetyl-alpha-D-glucosamine. Residue Cys-126 is the Proton donor of the active site. Cys-126 is modified (2-(S-cysteinyl)pyruvic acid O-phosphothioketal). Residues 131–135 (RPVDL), Asp-316, and Ile-338 each bind UDP-N-acetyl-alpha-D-glucosamine.

Belongs to the EPSP synthase family. MurA subfamily.

Its subcellular location is the cytoplasm. It catalyses the reaction phosphoenolpyruvate + UDP-N-acetyl-alpha-D-glucosamine = UDP-N-acetyl-3-O-(1-carboxyvinyl)-alpha-D-glucosamine + phosphate. Its pathway is cell wall biogenesis; peptidoglycan biosynthesis. Functionally, cell wall formation. Adds enolpyruvyl to UDP-N-acetylglucosamine. This Methylorubrum extorquens (strain CM4 / NCIMB 13688) (Methylobacterium extorquens) protein is UDP-N-acetylglucosamine 1-carboxyvinyltransferase.